The following is a 493-amino-acid chain: Stage V sporulation protein AF (493 aa).

Transmembrane regions (helical) follow at residues 296-316 (FFGI…VLQP), 334-354 (IPII…RMAA), 363-383 (TAMG…VGLF), 387-407 (VILY…YELS), and 418-438 (MILV…VLII).

This sequence belongs to the GerABKA family.

The protein localises to the cell membrane. This Bacillus subtilis (strain 168) protein is Stage V sporulation protein AF (spoVAF).